The chain runs to 173 residues: HTH-type transcriptional regulator IscR (173 aa).

Residues 2–131 (KLTSKGRYAV…NDITLGELMK (130 aa)) form the HTH rrf2-type domain. The segment at residues 28-51 (LADISERQGISLSYLEQLFSKLRK) is a DNA-binding region (H-T-H motif). C92, C98, and C104 together coordinate [2Fe-2S] cluster.

It depends on [2Fe-2S] cluster as a cofactor.

Regulates the transcription of several operons and genes involved in the biogenesis of Fe-S clusters and Fe-S-containing proteins. The sequence is that of HTH-type transcriptional regulator IscR from Vibrio atlanticus (strain LGP32) (Vibrio splendidus (strain Mel32)).